Reading from the N-terminus, the 43-residue chain is Thaumatin-like protein 1 (43 aa).

This sequence belongs to the thaumatin family.

This chain is Thaumatin-like protein 1, found in Glebionis coronaria (Crown daisy).